We begin with the raw amino-acid sequence, 398 residues long: Dual-specificity RNA methyltransferase RlmN (398 aa).

Catalysis depends on E121, which acts as the Proton acceptor. In terms of domain architecture, Radical SAM core spans 127–370; sequence ETDRGTLCVS…VRTPRGRDIL (244 aa). C134 and C373 are oxidised to a cystine. Residues C141, C145, and C148 each contribute to the [4Fe-4S] cluster site. S-adenosyl-L-methionine-binding positions include 199–200, S231, 253–255, and N330; these read GE and SLH. The active-site S-methylcysteine intermediate is C373.

It belongs to the radical SAM superfamily. RlmN family. The cofactor is [4Fe-4S] cluster.

It localises to the cytoplasm. The enzyme catalyses adenosine(2503) in 23S rRNA + 2 reduced [2Fe-2S]-[ferredoxin] + 2 S-adenosyl-L-methionine = 2-methyladenosine(2503) in 23S rRNA + 5'-deoxyadenosine + L-methionine + 2 oxidized [2Fe-2S]-[ferredoxin] + S-adenosyl-L-homocysteine. It catalyses the reaction adenosine(37) in tRNA + 2 reduced [2Fe-2S]-[ferredoxin] + 2 S-adenosyl-L-methionine = 2-methyladenosine(37) in tRNA + 5'-deoxyadenosine + L-methionine + 2 oxidized [2Fe-2S]-[ferredoxin] + S-adenosyl-L-homocysteine. Functionally, specifically methylates position 2 of adenine 2503 in 23S rRNA and position 2 of adenine 37 in tRNAs. m2A2503 modification seems to play a crucial role in the proofreading step occurring at the peptidyl transferase center and thus would serve to optimize ribosomal fidelity. The polypeptide is Dual-specificity RNA methyltransferase RlmN (Rhodopseudomonas palustris (strain BisB5)).